The primary structure comprises 105 residues: uncharacterized protein (105 aa).

Positions 22-105 (GSAGHGATEA…KKRIIKGKVM (84 aa)) are disordered. Residues 61–83 (HDSRPARGDARKRHCQENNKTDR) are compositionally biased toward basic and acidic residues. Basic residues predominate over residues 93–105 (NRRKKRIIKGKVM).

This is an uncharacterized protein from Escherichia coli (strain K12).